Consider the following 593-residue polypeptide: Trehalose synthase/amylase TreS (593 aa).

Asp-90 lines the substrate pocket. Asn-132 lines the Ca(2+) pocket. The substrate site is built by His-133 and Gln-198. A Ca(2+)-binding site is contributed by Asp-200. Residue Arg-228 coordinates substrate. Asp-230 serves as the catalytic Nucleophile. Tyr-234, Leu-235, and Glu-237 together coordinate Ca(2+). Glu-272 functions as the Proton donor in the catalytic mechanism. Substrate contacts are provided by His-341 and Asp-342.

Belongs to the glycosyl hydrolase 13 family. TreS subfamily. As to quaternary structure, homohexamer.

The catalysed reaction is D-maltose = alpha,alpha-trehalose. It catalyses the reaction Endohydrolysis of (1-&gt;4)-alpha-D-glucosidic linkages in polysaccharides containing three or more (1-&gt;4)-alpha-linked D-glucose units.. It functions in the pathway glycan biosynthesis; glycogen biosynthesis. The amylase activity is stimulated by addition of Ca(2+), but this cation and other divalent cations inhibit the trehalose synthase activity. In addition, trehalose synthase activity, but not amylase activity, is strongly inhibited, and in a competitive manner, by validoxylamine. On the other hand, amylase, but not trehalose synthase activity, is inhibited by the known transition-state amylase inhibitor, acarbose, suggesting the possibility of two different active sites. Other metal ions such as Mg(2+), Mn(2+), and Co(2+) are also somewhat effective in the stimulation of amylase activity, but Hg(2+), Cu(2+), Ni(2+) and Zn(2+) are inhibitory. Catalyzes the reversible interconversion of maltose and trehalose by transglucosylation. Maltose is the preferred substrate. To a lesser extent, also displays amylase activity, catalyzing the endohydrolysis of (1-&gt;4)-alpha-D-glucosidic linkages in glycogen and maltooligosaccharides such as maltoheptaose, to produce maltose which then can be converted to trehalose. TreS plays a key role in the utilization of trehalose for the production of glycogen and alpha-glucan via the TreS-Pep2 branch involved in the biosynthesis of maltose-1-phosphate (M1P). Might also function as a sensor and/or regulator of trehalose levels within the cell. Thus, when trehalose levels in the cell become dangerously low, TreS can expedite the conversion of glycogen to maltose via its amylase activity and then convert the maltose to trehalose; but this enzyme also can expedite or promote the conversion of trehalose to glycogen when cytoplasmic trehalose levels become too high. Is also able to catalyze the hydrolytic cleavage of alpha-aryl glucosides, as well as alpha-glucosyl fluoride in vitro. The polypeptide is Trehalose synthase/amylase TreS (Mycolicibacterium smegmatis (strain ATCC 700084 / mc(2)155) (Mycobacterium smegmatis)).